The sequence spans 329 residues: MVKTQRVVITPGEPAGIGPDLIVQLAQREWPVELVVCADATLLTDRAAMLGLPLTLRPYSPNSPAQPQTAGTLTLLPVALRESVTVGQLAVENGHYVVETLARACDGCLNGEFAALITGPVHKGVINDAGIPFTGHTEFFEERSQAKKVVMMLATEELRVALATTHLPLRDIADAITPALLHEVIAILHHDLRTKFGIAEPRILVCGLNPHAGEGGHMGTEEIDTIIPVLNELREQGMKLNGPLPADTLFQPKYLDNADAVLAMYHDQGLPVLKYQGFGRGVNITLGLPFIRTSVDHGTALELAGRGKADVGSFITALNLAIKMIVNTQ.

Residues histidine 136 and threonine 137 each contribute to the substrate site. Positions 166, 211, and 266 each coordinate a divalent metal cation. Positions 274, 283, and 292 each coordinate substrate.

This sequence belongs to the PdxA family. As to quaternary structure, homodimer. Requires Zn(2+) as cofactor. Mg(2+) is required as a cofactor. The cofactor is Co(2+).

The protein localises to the cytoplasm. The enzyme catalyses 4-(phosphooxy)-L-threonine + NAD(+) = 3-amino-2-oxopropyl phosphate + CO2 + NADH. It participates in cofactor biosynthesis; pyridoxine 5'-phosphate biosynthesis; pyridoxine 5'-phosphate from D-erythrose 4-phosphate: step 4/5. In terms of biological role, catalyzes the NAD(P)-dependent oxidation of 4-(phosphooxy)-L-threonine (HTP) into 2-amino-3-oxo-4-(phosphooxy)butyric acid which spontaneously decarboxylates to form 3-amino-2-oxopropyl phosphate (AHAP). The polypeptide is 4-hydroxythreonine-4-phosphate dehydrogenase (Escherichia coli O6:H1 (strain CFT073 / ATCC 700928 / UPEC)).